The sequence spans 204 residues: Leucyl/phenylalanyl-tRNA--protein transferase (204 aa).

This sequence belongs to the L/F-transferase family.

It is found in the cytoplasm. It carries out the reaction N-terminal L-lysyl-[protein] + L-leucyl-tRNA(Leu) = N-terminal L-leucyl-L-lysyl-[protein] + tRNA(Leu) + H(+). The catalysed reaction is N-terminal L-arginyl-[protein] + L-leucyl-tRNA(Leu) = N-terminal L-leucyl-L-arginyl-[protein] + tRNA(Leu) + H(+). It catalyses the reaction L-phenylalanyl-tRNA(Phe) + an N-terminal L-alpha-aminoacyl-[protein] = an N-terminal L-phenylalanyl-L-alpha-aminoacyl-[protein] + tRNA(Phe). In terms of biological role, functions in the N-end rule pathway of protein degradation where it conjugates Leu, Phe and, less efficiently, Met from aminoacyl-tRNAs to the N-termini of proteins containing an N-terminal arginine or lysine. This is Leucyl/phenylalanyl-tRNA--protein transferase from Rhizobium etli (strain CIAT 652).